A 171-amino-acid chain; its full sequence is 3-hydroxydecanoyl-[acyl-carrier-protein] dehydratase (171 aa).

Histidine 70 is an active-site residue.

The protein belongs to the thioester dehydratase family. FabA subfamily. Homodimer.

The protein localises to the cytoplasm. It carries out the reaction a (3R)-hydroxyacyl-[ACP] = a (2E)-enoyl-[ACP] + H2O. The catalysed reaction is (3R)-hydroxydecanoyl-[ACP] = (2E)-decenoyl-[ACP] + H2O. It catalyses the reaction (2E)-decenoyl-[ACP] = (3Z)-decenoyl-[ACP]. Its pathway is lipid metabolism; fatty acid biosynthesis. Functionally, necessary for the introduction of cis unsaturation into fatty acids. Catalyzes the dehydration of (3R)-3-hydroxydecanoyl-ACP to E-(2)-decenoyl-ACP and then its isomerization to Z-(3)-decenoyl-ACP. Can catalyze the dehydratase reaction for beta-hydroxyacyl-ACPs with saturated chain lengths up to 16:0, being most active on intermediate chain length. This chain is 3-hydroxydecanoyl-[acyl-carrier-protein] dehydratase, found in Methylococcus capsulatus (strain ATCC 33009 / NCIMB 11132 / Bath).